A 283-amino-acid polypeptide reads, in one-letter code: MIINHNLSAVNAHRSLKFNELAVDKTMKALSSGMRINSAADDASGLAVSEKLRTQINGLRQAERNTEDGMSFIQTAEGFLEQTSNIIQRIRVLAIQTSNGIYSNEDRQLVQVEVSALVDEVDRIASQAEFNKFKLFEGQFARGSRVASMWFHMGPNQNQRERFYIGTMTSKALKLVKADGRPIAISSPGEANDVIGLADAALTKIMKQRADMGAYYNRLEYTAKGLMGAYENMQASESRIRDADMAEEVVSLTTKQILVQSGTAMLAQANMKPNSVLKLLQQI.

It belongs to the bacterial flagellin family. In terms of assembly, the flagellum consists of two outer layers around a core that contains several antigenically related polypeptides.

The protein localises to the periplasmic flagellum. It localises to the periplasm. In terms of biological role, component of the core of the flagella. This chain is Flagellar filament 35 kDa core protein (flaB), found in Leptospira interrogans serogroup Icterohaemorrhagiae serovar Lai (strain 56601).